We begin with the raw amino-acid sequence, 248 residues long: Mannose-binding protein C (248 aa).

Residues 1–20 (MSLFPSLPLLLLSVVATSYS) form the signal peptide. Residues 42–99 (GINGFPGKDGRDGTKGEKGEPGQGLRGLQGPPGKLGPPGNPGPSGSPGPKGQKGDPGE) enclose the Collagen-like domain. The disordered stretch occupies residues 43-111 (INGFPGKDGR…DCDSSLAASE (69 aa)). A 4-hydroxyproline modification is found at P47. A compositionally biased stretch (basic and acidic residues) spans 49–61 (KDGRDGTKGEKGE). 4-hydroxyproline is present on residues P73, P79, P82, and P88. The segment covering 75-87 (KLGPPGNPGPSGS) has biased composition (pro residues). Positions 112–130 (RKALQTEMAHIKKWLTFSL) form a coiled coil. One can recognise a C-type lectin domain in the interval 134 to 245 (VGNKFFLTNG…CSSSHLALCE (112 aa)). 2 disulfides stabilise this stretch: C155–C244 and C222–C236.

As to quaternary structure, oligomeric complex of 3 or more homotrimers. Interacts with MASP1 and MASP2. Interacts with MEP1A and MEP1B and may inhibit their catalytic activity. Hydroxylation on proline residues within the sequence motif, GXPG, is most likely to be 4-hydroxy as this fits the requirement for 4-hydroxylation in vertebrates.

The protein localises to the secreted. In terms of biological role, calcium-dependent lectin involved in innate immune defense. Binds mannose, fucose and N-acetylglucosamine on different microorganisms and activates the lectin complement pathway. Binds to late apoptotic cells, as well as to apoptotic blebs and to necrotic cells, but not to early apoptotic cells, facilitating their uptake by macrophages. The protein is Mannose-binding protein C (MBL2) of Trachypithecus obscurus (Dusky leaf-monkey).